Consider the following 194-residue polypeptide: Xanthine phosphoribosyltransferase (194 aa).

2 residues coordinate xanthine: leucine 20 and asparagine 27. Alanine 128–alanine 132 provides a ligand contact to 5-phospho-alpha-D-ribose 1-diphosphate. Lysine 156 is a binding site for xanthine.

The protein belongs to the purine/pyrimidine phosphoribosyltransferase family. Xpt subfamily. As to quaternary structure, homodimer.

It is found in the cytoplasm. It carries out the reaction XMP + diphosphate = xanthine + 5-phospho-alpha-D-ribose 1-diphosphate. It functions in the pathway purine metabolism; XMP biosynthesis via salvage pathway; XMP from xanthine: step 1/1. Its function is as follows. Converts the preformed base xanthine, a product of nucleic acid breakdown, to xanthosine 5'-monophosphate (XMP), so it can be reused for RNA or DNA synthesis. In Geobacillus thermodenitrificans (strain NG80-2), this protein is Xanthine phosphoribosyltransferase.